A 404-amino-acid polypeptide reads, in one-letter code: Glucose-1-phosphate adenylyltransferase (404 aa).

Alpha-D-glucose 1-phosphate-binding positions include tyrosine 99, glycine 164, 179–180, and serine 197; that span reads EK.

Belongs to the bacterial/plant glucose-1-phosphate adenylyltransferase family.

It catalyses the reaction alpha-D-glucose 1-phosphate + ATP + H(+) = ADP-alpha-D-glucose + diphosphate. Its pathway is capsule biogenesis; capsule polysaccharide biosynthesis. The protein operates within glycan biosynthesis; glycogen biosynthesis. In terms of biological role, involved in the biosynthesis of ADP-glucose, a building block, required in the biosynthesis of maltose-1-phosphate (M1P) and in the elongation reactions to produce linear alpha-1,4-glucans. Catalyzes the reaction between ATP and alpha-D-glucose 1-phosphate (G1P) to produce pyrophosphate and ADP-Glc. This chain is Glucose-1-phosphate adenylyltransferase, found in Mycobacteroides abscessus (strain ATCC 19977 / DSM 44196 / CCUG 20993 / CIP 104536 / JCM 13569 / NCTC 13031 / TMC 1543 / L948) (Mycobacterium abscessus).